Consider the following 201-residue polypeptide: Molybdenum cofactor guanylyltransferase (201 aa).

Residues 15–17 (LAG), K28, D74, and D104 contribute to the GTP site. D104 lines the Mg(2+) pocket.

The protein belongs to the MobA family. Monomer. It depends on Mg(2+) as a cofactor.

It is found in the cytoplasm. The catalysed reaction is Mo-molybdopterin + GTP + H(+) = Mo-molybdopterin guanine dinucleotide + diphosphate. In terms of biological role, transfers a GMP moiety from GTP to Mo-molybdopterin (Mo-MPT) cofactor (Moco or molybdenum cofactor) to form Mo-molybdopterin guanine dinucleotide (Mo-MGD) cofactor. This is Molybdenum cofactor guanylyltransferase from Pseudomonas syringae pv. tomato (strain ATCC BAA-871 / DC3000).